The primary structure comprises 434 residues: Serine hydroxymethyltransferase (434 aa).

(6S)-5,6,7,8-tetrahydrofolate-binding positions include Leu-133 and 137–139 (GHL). Lys-242 carries the post-translational modification N6-(pyridoxal phosphate)lysine.

It belongs to the SHMT family. As to quaternary structure, homodimer. Pyridoxal 5'-phosphate serves as cofactor.

Its subcellular location is the cytoplasm. The catalysed reaction is (6R)-5,10-methylene-5,6,7,8-tetrahydrofolate + glycine + H2O = (6S)-5,6,7,8-tetrahydrofolate + L-serine. It functions in the pathway one-carbon metabolism; tetrahydrofolate interconversion. It participates in amino-acid biosynthesis; glycine biosynthesis; glycine from L-serine: step 1/1. Functionally, catalyzes the reversible interconversion of serine and glycine with tetrahydrofolate (THF) serving as the one-carbon carrier. This reaction serves as the major source of one-carbon groups required for the biosynthesis of purines, thymidylate, methionine, and other important biomolecules. Also exhibits THF-independent aldolase activity toward beta-hydroxyamino acids, producing glycine and aldehydes, via a retro-aldol mechanism. The chain is Serine hydroxymethyltransferase from Methylorubrum extorquens (strain CM4 / NCIMB 13688) (Methylobacterium extorquens).